We begin with the raw amino-acid sequence, 378 residues long: Prolargin (378 aa).

A signal peptide spans 1-21 (MRASFFWLLPLLLILASVAQG). Residues 22–62 (QPTRPKPGIRRKPKPRPTPRFPQAPEPAEPTDLPPPLPPGP) form a disordered region. A compositionally biased stretch (basic residues) spans 28-38 (PGIRRKPKPRP). Residues 39–62 (TPRFPQAPEPAEPTDLPPPLPPGP) show a composition bias toward pro residues. LRR repeat units follow at residues 91–110 (RRVPVIPPRIHYLYLQNNFI), 111–134 (TELPLESFQNATGLRWVNLDNNRI), 135–158 (RKVDQRVLGKLPSLAFLYMEKNQL), 159–179 (EEVPSALPRNLEQLRLSQNLI), 180–203 (SRIPPGVFSKLENLLLLDLQHNRL), 204–229 (SDGVFKADTFQGLKNLMQLNLAHNIL), 230–250 (RKMPPKVPQAIHQLYLDSNKI), 251–274 (ETIPNGYFKDFPNLAFIRMNYNKL), 275–299 (SDRGLPKNSFNISNLLVLHLSHNKI), 300–319 (SNVPAISNKLEHLYLNNNSI), 320–358 (EKINGTQICPNNLVAFHDFSSDLENVPHLRYLRLDGNFL), and 359–378 (KPPIPLDLMMCFRLLQSVVI). An N-linked (GlcNAc...) asparagine glycan is attached at Asn120. N-linked (GlcNAc...) asparagine glycans are attached at residues Asn285, Asn316, and Asn323. Cys328 and Cys369 are joined by a disulfide.

This sequence belongs to the small leucine-rich proteoglycan (SLRP) family. SLRP class II subfamily. Binds the basement membrane heparan sulfate proteoglycan perlecan and triple helical collagens type I and type II. Post-translationally, glycosylated; contains heparan sulfate. As to expression, expressed in cartilage throughout both fetal development and postnatal life. It is also expressed in the developing embryo prior to skeletogenesis. In adult, highest expression in lung, lower levels in cardiac and skeletal muscle.

It localises to the secreted. The protein localises to the extracellular space. Its subcellular location is the extracellular matrix. Its function is as follows. May anchor basement membranes to the underlying connective tissue. This is Prolargin (Prelp) from Mus musculus (Mouse).